Consider the following 286-residue polypeptide: Meiotically up-regulated gene 64 protein (286 aa).

The protein resides in the cytoplasm. In terms of biological role, has a role in meiosis. The polypeptide is Meiotically up-regulated gene 64 protein (mug64) (Schizosaccharomyces pombe (strain 972 / ATCC 24843) (Fission yeast)).